Reading from the N-terminus, the 43-residue chain is Metallothionein-3 (43 aa).

It belongs to the metallothionein superfamily. Type 5 family.

This protein binds cations of several transition elements. Thought to be involved in metal ion homeostasis. The chain is Metallothionein-3 (MtnC) from Drosophila melanogaster (Fruit fly).